Reading from the N-terminus, the 457-residue chain is tRNA-2-methylthio-N(6)-dimethylallyladenosine synthase (457 aa).

Residues 4–119 (RNFHIITFGC…APDAIERLYA (116 aa)) form the MTTase N-terminal domain. [4Fe-4S] cluster-binding residues include Cys-13, Cys-48, Cys-82, Cys-164, Cys-168, and Cys-171. Positions 150-385 (NTLALMAYVN…QATQLEHSTS (236 aa)) constitute a Radical SAM core domain. Residues 388–456 (KSRVGVETTV…KHSLVAEPLI (69 aa)) enclose the TRAM domain.

The protein belongs to the methylthiotransferase family. MiaB subfamily. In terms of assembly, monomer. It depends on [4Fe-4S] cluster as a cofactor.

It localises to the cytoplasm. The enzyme catalyses N(6)-dimethylallyladenosine(37) in tRNA + (sulfur carrier)-SH + AH2 + 2 S-adenosyl-L-methionine = 2-methylsulfanyl-N(6)-dimethylallyladenosine(37) in tRNA + (sulfur carrier)-H + 5'-deoxyadenosine + L-methionine + A + S-adenosyl-L-homocysteine + 2 H(+). Functionally, catalyzes the methylthiolation of N6-(dimethylallyl)adenosine (i(6)A), leading to the formation of 2-methylthio-N6-(dimethylallyl)adenosine (ms(2)i(6)A) at position 37 in tRNAs that read codons beginning with uridine. This chain is tRNA-2-methylthio-N(6)-dimethylallyladenosine synthase, found in Lawsonia intracellularis (strain PHE/MN1-00).